A 91-amino-acid chain; its full sequence is Sec-independent protein translocase protein TatA (91 aa).

A helical transmembrane segment spans residues 2–22 (ANLGFPELVLIAVVILVLFGW). The span at 43 to 55 (VSEMKNDGAEAEK) shows a compositional bias: basic and acidic residues. The tract at residues 43–91 (VSEMKNDGAEAEKTSAASTKTDEITSVSSTDTPQPTVTVESKDEKKHPA) is disordered. The span at 57–81 (SAASTKTDEITSVSSTDTPQPTVTV) shows a compositional bias: polar residues. The span at 82–91 (ESKDEKKHPA) shows a compositional bias: basic and acidic residues.

The protein belongs to the TatA/E family. The Tat system comprises two distinct complexes: a TatABC complex, containing multiple copies of TatA, TatB and TatC subunits, and a separate TatA complex, containing only TatA subunits. Substrates initially bind to the TatABC complex, which probably triggers association of the separate TatA complex to form the active translocon.

The protein localises to the cell membrane. Functionally, part of the twin-arginine translocation (Tat) system that transports large folded proteins containing a characteristic twin-arginine motif in their signal peptide across membranes. TatA could form the protein-conducting channel of the Tat system. The protein is Sec-independent protein translocase protein TatA of Corynebacterium kroppenstedtii (strain DSM 44385 / JCM 11950 / CIP 105744 / CCUG 35717).